We begin with the raw amino-acid sequence, 98 residues long: Tax1-binding protein 3 (98 aa).

An N-acetylserine modification is found at Ser2. Residues Val12 to Ser87 form the PDZ domain.

As to quaternary structure, interacts (via its PDZ domain) with GLS2. Interacts (via its PDZ domain) with RTKN (via the C-terminal region); this interaction facilitates Rho-mediated activation of the FOS serum response element (SRE). Interacts (via PDZ domain) with ARHGEF16. Interacts (via PDZ domain) with KCNJ4 (via C-terminus). Competes with LIN7A for KCNJ4 binding. Interacts (via its PDZ domain) with CTNNB1; this interaction inhibits the transcriptional activity of CTNNB1. Interacts with ADGRB2. As to expression, detected in kidney distal convoluted tubules (at protein level).

The protein localises to the cytoplasm. It is found in the nucleus. It localises to the cell membrane. May regulate a number of protein-protein interactions by competing for PDZ domain binding sites. Binds CTNNB1 and may thereby act as an inhibitor of the Wnt signaling pathway. Competes with LIN7A for KCNJ4 binding, and thereby promotes KCNJ4 internalization. May play a role in the Rho signaling pathway. In Rattus norvegicus (Rat), this protein is Tax1-binding protein 3.